The following is a 203-amino-acid chain: MQNAPESVLNALVPMVVEQTAKGERSYDIYSRLLKERVIFLVGQVEEHMANLIVAQLLFLESENPDQEISLYINSPGGSVTAGMAIYDTMQFIKPNVSTVCIGQAASMGAFLLAGGAKGKRHCLPNSRVMIHQPLGGFQGQASDFAIHAQEILGIKNKLNNILAEHTGQPLEVIERDTDRDNFMSAAQAAEYGLVDSVFEQRG.

Serine 107 acts as the Nucleophile in catalysis. The active site involves histidine 132.

It belongs to the peptidase S14 family. In terms of assembly, fourteen ClpP subunits assemble into 2 heptameric rings which stack back to back to give a disk-like structure with a central cavity, resembling the structure of eukaryotic proteasomes.

The protein localises to the cytoplasm. It catalyses the reaction Hydrolysis of proteins to small peptides in the presence of ATP and magnesium. alpha-casein is the usual test substrate. In the absence of ATP, only oligopeptides shorter than five residues are hydrolyzed (such as succinyl-Leu-Tyr-|-NHMec, and Leu-Tyr-Leu-|-Tyr-Trp, in which cleavage of the -Tyr-|-Leu- and -Tyr-|-Trp bonds also occurs).. Functionally, cleaves peptides in various proteins in a process that requires ATP hydrolysis. Has a chymotrypsin-like activity. Plays a major role in the degradation of misfolded proteins. This chain is ATP-dependent Clp protease proteolytic subunit, found in Shewanella woodyi (strain ATCC 51908 / MS32).